The primary structure comprises 1091 residues: Sodium/potassium exporting P-type ATPase 5 (1091 aa).

The Cytoplasmic portion of the chain corresponds to 1–63 (MSEGTVKENN…LGDDTKIDYK (63 aa)). The chain crosses the membrane as a helical span at residues 64-84 (AMVLHQVCNAMIMVLVISMAI). Over 85 to 90 (SFAVRD) the chain is Extracellular. The helical transmembrane segment at 91–111 (WITGGVISFVIAVNVLIGLVQ) threads the bilayer. The Cytoplasmic segment spans residues 112-282 (EYKATKTMNS…TNVGTPLHRK (171 aa)). Residues 283-303 (LSKLAVLLFWIAVLFAIIVMA) form a helical membrane-spanning segment. Residues 304-312 (SQKFDVDKR) lie on the Extracellular side of the membrane. A helical membrane pass occupies residues 313-333 (VAIYAICVALSMIPSSLVVVL). At 334–815 (TITMSVGAAV…RRMTDNIQKF (482 aa)) the chain is on the cytoplasmic side. Residue Asp369 is the 4-aspartylphosphate intermediate of the active site. Residues Asp369 and Thr371 each contribute to the Mg(2+) site. Thr371 and Glu483 together coordinate ATP. The disordered stretch occupies residues 499-525 (ALTGEKSTNQSNENDQSSLSQHNEKPG). The span at 503 to 519 (EKSTNQSNENDQSSLSQ) shows a compositional bias: polar residues. ATP contacts are provided by Lys561, Arg606, Thr673, Gly674, Asp675, Arg732, and Lys738. Residue Asp757 coordinates Mg(2+). Residue Asn760 participates in ATP binding. The chain crosses the membrane as a helical span at residues 816–836 (VLQLLAENVAQALYLIIGLVF). Residues 837-848 (RDENGKSVFPLS) lie on the Extracellular side of the membrane. The helical transmembrane segment at 849–869 (PVEVLWIIVVTSCFPAMGLGL) threads the bilayer. The Cytoplasmic segment spans residues 870–885 (EKAAPDLMDRPPNDSE). A helical transmembrane segment spans residues 886–906 (VGIFTWEVIIDTFAYGIIMTG). The Extracellular segment spans residues 907 to 943 (SCMASFTGSLYGINSGRLGHDCDGTYNSSCRDVYRSR). A helical membrane pass occupies residues 944 to 964 (SAAFATMTWCALILAWEVVDM). At 965–991 (RRSFFRMHPDTDSPVKEFFRSIWGNQF) the chain is on the cytoplasmic side. A helical transmembrane segment spans residues 992–1012 (LFWSIIFGFVSAFPVVYIPVI). The Extracellular segment spans residues 1013–1021 (NDKVFLHKP). A helical transmembrane segment spans residues 1022–1042 (IGAEWGLAIAFTIAFWIGAEL). The Cytoplasmic portion of the chain corresponds to 1043 to 1091 (YKCGKRRYFKTQRAHNSENDLERSSKHDPFEAYSTSTTLQSEINISVKH).

This sequence belongs to the cation transport ATPase (P-type) (TC 3.A.3) family. Type IID subfamily. The cofactor is Mg(2+). The active site is phosphorylated in presence of sodium or potassium and in conditions of higher pH. Not phosphorylated in presence of calcium ions.

Its subcellular location is the cell membrane. It carries out the reaction Na(+)(in) + ATP + H2O = Na(+)(out) + ADP + phosphate + H(+). The catalysed reaction is K(+)(in) + ATP + H2O = K(+)(out) + ADP + phosphate + H(+). Functionally, catalyzes the hydrolysis of ATP coupled with the export of sodium and potassium from the cell. May export potassium less efficiently. May transport other cations such as lithium. Sodium/potassium efflux ATPases are involved in salt tolerance and maintaining the membrane potential across the plasma membrane in high salinity (Na+) or alkaline (K+) environments. The sequence is that of Sodium/potassium exporting P-type ATPase 5 from Saccharomyces cerevisiae (strain ATCC 204508 / S288c) (Baker's yeast).